We begin with the raw amino-acid sequence, 293 residues long: uncharacterized protein (293 aa).

The HTH lysR-type domain occupies 1–60; the sequence is MHITLRQLEVFAEVLKSGSTTQASVMLALSQSAVSAALTDLEGQLGVQLFDRVGKRLVVN. Positions 20–39 form a DNA-binding region, H-T-H motif; the sequence is TTQASVMLALSQSAVSAALT.

The protein belongs to the LysR transcriptional regulatory family.

This is an uncharacterized protein from Escherichia coli O157:H7.